Consider the following 348-residue polypeptide: Protein RecA (348 aa).

Residue 71–78 (GVESSGKT) coordinates ATP.

It belongs to the RecA family.

It localises to the cytoplasm. Functionally, can catalyze the hydrolysis of ATP in the presence of single-stranded DNA, the ATP-dependent uptake of single-stranded DNA by duplex DNA, and the ATP-dependent hybridization of homologous single-stranded DNAs. It interacts with LexA causing its activation and leading to its autocatalytic cleavage. This is Protein RecA from Aquifex pyrophilus.